The chain runs to 303 residues: Glutathione transport system permease protein GsiD (303 aa).

Transmembrane regions (helical) follow at residues 40 to 60 (AMTA…ARWI), 105 to 125 (LAAG…LGLL), 144 to 164 (LFAF…GSGI), 165 to 185 (ANVI…LVRG), 222 to 242 (IVVF…SLSF), and 266 to 286 (VIAP…VLAF). The ABC transmembrane type-1 domain occupies 101-290 (AQISLAAGVF…LTVLAFNLLG (190 aa)).

The protein belongs to the binding-protein-dependent transport system permease family. The complex is composed of two ATP-binding proteins (GsiA), two transmembrane proteins (GsiC and GsiD) and a solute-binding protein (GsiB).

Its subcellular location is the cell inner membrane. In terms of biological role, part of the ABC transporter complex GsiABCD involved in glutathione import. Probably responsible for the translocation of the substrate across the membrane. This Escherichia coli O6:K15:H31 (strain 536 / UPEC) protein is Glutathione transport system permease protein GsiD.